Consider the following 561-residue polypeptide: Transmembrane protein 209 (561 aa).

Residues S9 and S11 each carry the phosphoserine modification. Residues 28-48 (VVLAWGLLNVSMAGMIYTEMT) traverse the membrane as a helical segment. An N-linked (GlcNAc...) asparagine glycan is attached at N57. The helical transmembrane segment at 60 to 80 (YWPLWYIELALASLFSLNALF) threads the bilayer. S98 carries the phosphoserine modification. 2 disordered regions span residues 119–157 (DLAA…FTTS) and 195–234 (FSPS…DKED). Residues 133 to 157 (SIQGQSVLSYSPSRSPSTSPKFTTS) are compositionally biased toward low complexity. Residues S201, S222, and S248 each carry the phosphoserine modification. The span at 220–229 (RSSPTVYNSP) shows a compositional bias: polar residues. Positions 250-271 (EEKQHRVKLGSPDSTSPSSSPT) are disordered. Over residues 260–271 (SPDSTSPSSSPT) the composition is skewed to low complexity. Residue N274 is glycosylated (N-linked (GlcNAc...) asparagine). Position 278 is a phosphoserine (S278).

Interacts with NUP205. In terms of tissue distribution, expressed in the testis.

It is found in the membrane. The protein localises to the nucleus envelope. The protein resides in the golgi apparatus. Its subcellular location is the cytoplasm. Functionally, nuclear envelope protein which in association with NUP205, may be involved in nuclear transport of various nuclear proteins in addition to MYC. This is Transmembrane protein 209 (TMEM209) from Homo sapiens (Human).